Reading from the N-terminus, the 188-residue chain is Putative manganese efflux pump MntP (188 aa).

The next 6 membrane-spanning stretches (helical) occupy residues 3–23 (WLTI…VALA), 39–59 (LGFH…LLGM), 65–85 (ISAY…GRMV), 104–124 (GMTM…VGLS), 125–145 (IAML…VAGV), and 167–187 (ICGG…HTLL).

The protein belongs to the MntP (TC 9.B.29) family.

It is found in the cell inner membrane. Probably functions as a manganese efflux pump. In Citrifermentans bemidjiense (strain ATCC BAA-1014 / DSM 16622 / JCM 12645 / Bem) (Geobacter bemidjiensis), this protein is Putative manganese efflux pump MntP.